The chain runs to 522 residues: Zinc finger and BTB domain-containing protein 18 (522 aa).

The region spanning 24–91 (CDCTVLVGDA…MYEGKLQFKD (68 aa)) is the BTB domain. A compositionally biased stretch (basic and acidic residues) spans 121–143 (ATTEADSTKKEEDASSCSDKVES). Positions 121-165 (ATTEADSTKKEEDASSCSDKVESLSDGSSHMAGDLPSDEDEGEDE) are disordered. A Phosphoserine modification is found at S157. Residue K273 forms a Glycyl lysine isopeptide (Lys-Gly) (interchain with G-Cter in SUMO2) linkage. An interaction with DNMT3A region spans residues 310 to 427 (EPAHLAPLRE…TFSCMYTLKR (118 aa)). C2H2-type zinc fingers lie at residues 370–392 (FMCP…LSTH), 410–432 (PTCS…ERTH), 438–460 (YTCT…AVVH), and 466–489 (HACK…RKFH). 2 positions are modified to phosphoserine: S516 and S517.

Belongs to the krueppel C2H2-type zinc-finger protein family. ZBTB18 subfamily. As to quaternary structure, interacts with DNMT3A.

The protein resides in the nucleus. In terms of biological role, transcriptional repressor that plays a role in various developmental processes such as myogenesis and brain development. Specifically binds the consensus DNA sequence 5'-[AC]ACATCTG[GT][AC]-3' which contains the E box core, and acts by recruiting chromatin remodeling multiprotein complexes. Plays a key role in myogenesis by directly repressing the expression of ID2 and ID3, 2 inhibitors of skeletal myogenesis. Also involved in controlling cell division of progenitor cells and regulating the survival of postmitotic cortical neurons. May also play a role in the organization of chromosomes in the nucleus. The chain is Zinc finger and BTB domain-containing protein 18 (ZBTB18) from Bos taurus (Bovine).